We begin with the raw amino-acid sequence, 100 residues long: Urease subunit gamma (100 aa).

Belongs to the urease gamma subunit family. Heterotrimer of UreA (gamma), UreB (beta) and UreC (alpha) subunits. Three heterotrimers associate to form the active enzyme.

It is found in the cytoplasm. The enzyme catalyses urea + 2 H2O + H(+) = hydrogencarbonate + 2 NH4(+). It participates in nitrogen metabolism; urea degradation; CO(2) and NH(3) from urea (urease route): step 1/1. This Staphylococcus aureus (strain N315) protein is Urease subunit gamma.